Consider the following 284-residue polypeptide: Parvulin-like PPIase (284 aa).

The signal sequence occupies residues 1–20; it reads MKKLSIVLLSVSMLSSIAFA. Positions 139–232 constitute a PpiC domain; it reads KEQIKVAHIL…YGWHIIKVLE (94 aa).

The protein belongs to the PpiC/parvulin rotamase family.

Its subcellular location is the cell outer membrane. The enzyme catalyses [protein]-peptidylproline (omega=180) = [protein]-peptidylproline (omega=0). This chain is Parvulin-like PPIase (plp), found in Rickettsia bellii (strain RML369-C).